We begin with the raw amino-acid sequence, 189 residues long: Holliday junction branch migration complex subunit RuvA (189 aa).

The tract at residues 1-62 is domain I; the sequence is MIVALKGNIE…EEAWSLYGFA (62 aa). A domain II region spans residues 63–138; it reads EEAEKRVFDT…FSLSLQEGSK (76 aa). The segment at 138–139 is flexible linker; the sequence is KA. Residues 140–189 are domain III; that stretch reads STPPVFEESRLALESLGFKSELIAKALQNIQATTTQEIIKEALKKLQTLR.

This sequence belongs to the RuvA family. As to quaternary structure, homotetramer. Forms an RuvA(8)-RuvB(12)-Holliday junction (HJ) complex. HJ DNA is sandwiched between 2 RuvA tetramers; dsDNA enters through RuvA and exits via RuvB. An RuvB hexamer assembles on each DNA strand where it exits the tetramer. Each RuvB hexamer is contacted by two RuvA subunits (via domain III) on 2 adjacent RuvB subunits; this complex drives branch migration. In the full resolvosome a probable DNA-RuvA(4)-RuvB(12)-RuvC(2) complex forms which resolves the HJ.

The protein localises to the cytoplasm. In terms of biological role, the RuvA-RuvB-RuvC complex processes Holliday junction (HJ) DNA during genetic recombination and DNA repair, while the RuvA-RuvB complex plays an important role in the rescue of blocked DNA replication forks via replication fork reversal (RFR). RuvA specifically binds to HJ cruciform DNA, conferring on it an open structure. The RuvB hexamer acts as an ATP-dependent pump, pulling dsDNA into and through the RuvAB complex. HJ branch migration allows RuvC to scan DNA until it finds its consensus sequence, where it cleaves and resolves the cruciform DNA. The polypeptide is Holliday junction branch migration complex subunit RuvA (Wolinella succinogenes (strain ATCC 29543 / DSM 1740 / CCUG 13145 / JCM 31913 / LMG 7466 / NCTC 11488 / FDC 602W) (Vibrio succinogenes)).